The primary structure comprises 188 residues: 3-deoxy-D-manno-octulosonate 8-phosphate phosphatase KdsC (188 aa).

D32 and D34 together coordinate Mg(2+). Residues D34, 55 to 59 (NVRDG), R63, R78, R86, and K102 contribute to the substrate site. D125 lines the Mg(2+) pocket.

It belongs to the KdsC family. Homotetramer. Mg(2+) is required as a cofactor.

It catalyses the reaction 3-deoxy-alpha-D-manno-2-octulosonate-8-phosphate + H2O = 3-deoxy-alpha-D-manno-oct-2-ulosonate + phosphate. It functions in the pathway carbohydrate biosynthesis; 3-deoxy-D-manno-octulosonate biosynthesis; 3-deoxy-D-manno-octulosonate from D-ribulose 5-phosphate: step 3/3. The protein operates within bacterial outer membrane biogenesis; lipopolysaccharide biosynthesis. Catalyzes the hydrolysis of 3-deoxy-D-manno-octulosonate 8-phosphate (KDO 8-P) to 3-deoxy-D-manno-octulosonate (KDO) and inorganic phosphate. This chain is 3-deoxy-D-manno-octulosonate 8-phosphate phosphatase KdsC, found in Escherichia coli (strain K12).